Here is a 516-residue protein sequence, read N- to C-terminus: L-amino acid oxidase Lm29 (516 aa).

A signal peptide spans 1–18 (MNVFFMFSLLFLAALGSC). A disulfide bridge links Cys28 with Cys191. FAD-binding positions include 61 to 62 (MS), 81 to 82 (EA), Arg89, and 105 to 108 (GPMR). Position 108 (Arg108) interacts with substrate. Residue Asn190 is glycosylated (N-linked (GlcNAc...) asparagine). A substrate-binding site is contributed by His241. Position 279 (Val279) interacts with FAD. A disulfide bridge links Cys349 with Cys430. Residue Asn379 is glycosylated (N-linked (GlcNAc...) asparagine). Tyr390 contacts substrate. FAD is bound by residues Glu475 and 482 to 487 (GWIDST). 482 to 483 (GW) is a substrate binding site.

The protein belongs to the flavin monoamine oxidase family. FIG1 subfamily. In terms of assembly, homodimer; non-covalently linked. Requires FAD as cofactor. In terms of tissue distribution, expressed by the venom gland.

The protein resides in the secreted. The enzyme catalyses an L-alpha-amino acid + O2 + H2O = a 2-oxocarboxylate + H2O2 + NH4(+). It catalyses the reaction L-leucine + O2 + H2O = 4-methyl-2-oxopentanoate + H2O2 + NH4(+). It carries out the reaction L-phenylalanine + O2 + H2O = 3-phenylpyruvate + H2O2 + NH4(+). The catalysed reaction is L-tryptophan + O2 + H2O = indole-3-pyruvate + H2O2 + NH4(+). The enzyme catalyses L-methionine + O2 + H2O = 4-methylsulfanyl-2-oxobutanoate + H2O2 + NH4(+). It catalyses the reaction L-isoleucine + O2 + H2O = (S)-3-methyl-2-oxopentanoate + H2O2 + NH4(+). It carries out the reaction L-tyrosine + O2 + H2O = 3-(4-hydroxyphenyl)pyruvate + H2O2 + NH4(+). Its function is as follows. Catalyzes an oxidative deamination of predominantly hydrophobic and aromatic L-amino acids, thus producing hydrogen peroxide that may contribute to the diverse toxic effects of this enzyme. Is highly active on L-Met=L-Leu&gt;&gt;L-Phe&gt;L-Trp&gt;L-Tyr&gt;L-Ile, and weakly or not active on L-His, L-Arg, L-Val, L-Gln, L-Thr, L-Lys, and L-Ser. Exhibits a low myotoxicity (a mild myonecrosis is observed after injection in mice quadriceps muscle). In vitro, is cytotoxic to a lot of human cell lines, including AGS (IC(50)=22.7 ug/ml), MCF-7 (IC(50)=1.4 ug/ml), HL-60, HeLa and Jurkat cells, as well as to the parasite Leishmania brasiliensis (IC(50)=2.22 ug/ml). This cytotoxicity is dependent on the production of hydrogen peroxyde, since it is inhibited by catalase, a hydrogen peroxyde scavenger. The sequence is that of L-amino acid oxidase Lm29 from Lachesis muta (South American bushmaster).